Reading from the N-terminus, the 530-residue chain is Glucose-6-phosphate 1-dehydrogenase (530 aa).

NADP(+) is bound by residues glycine 53–lysine 60, arginine 87, tyrosine 162, and lysine 186. D-glucose 6-phosphate is bound by residues lysine 186, histidine 216–lysine 220, glutamate 254, and aspartate 273. Histidine 278 functions as the Proton acceptor in the catalytic mechanism. Arginine 372 lines the NADP(+) pocket. Residues lysine 375 and arginine 380 each coordinate D-glucose 6-phosphate. Positions 381, 385, and 408 each coordinate NADP(+). Residue glutamine 410 coordinates D-glucose 6-phosphate. NADP(+)-binding positions include tyrosine 416–lysine 418, aspartate 436–threonine 438, arginine 502, tyrosine 518, and tryptophan 524.

It belongs to the glucose-6-phosphate dehydrogenase family.

It localises to the cytoplasm. The protein resides in the cytosol. The catalysed reaction is D-glucose 6-phosphate + NADP(+) = 6-phospho-D-glucono-1,5-lactone + NADPH + H(+). Its pathway is carbohydrate degradation; pentose phosphate pathway; D-ribulose 5-phosphate from D-glucose 6-phosphate (oxidative stage): step 1/3. In terms of biological role, cytosolic glucose-6-phosphate dehydrogenase that catalyzes the first and rate-limiting step of the oxidative branch within the pentose phosphate pathway/shunt, an alternative route to glycolysis for the dissimilation of carbohydrates and a major source of reducing power and metabolic intermediates for fatty acid and nucleic acid biosynthetic processes. The protein is Glucose-6-phosphate 1-dehydrogenase (g6pd) of Takifugu rubripes (Japanese pufferfish).